Here is a 102-residue protein sequence, read N- to C-terminus: Protein translation factor SUI1 homolog (102 aa).

It belongs to the SUI1 family.

This Methanosarcina acetivorans (strain ATCC 35395 / DSM 2834 / JCM 12185 / C2A) protein is Protein translation factor SUI1 homolog.